A 333-amino-acid chain; its full sequence is NADH-quinone oxidoreductase subunit H (333 aa).

The next 8 helical transmembrane spans lie at Phe-15–Tyr-35, Phe-88–Phe-108, Ile-117–Thr-137, Ile-159–Leu-179, Val-191–Glu-211, Trp-239–Val-259, Ile-274–Val-296, and Val-313–Phe-333.

This sequence belongs to the complex I subunit 1 family. NDH-1 is composed of 14 different subunits. Subunits NuoA, H, J, K, L, M, N constitute the membrane sector of the complex.

The protein localises to the cell membrane. It catalyses the reaction a quinone + NADH + 5 H(+)(in) = a quinol + NAD(+) + 4 H(+)(out). NDH-1 shuttles electrons from NADH, via FMN and iron-sulfur (Fe-S) centers, to quinones in the respiratory chain. The immediate electron acceptor for the enzyme in this species is believed to be ubiquinone. Couples the redox reaction to proton translocation (for every two electrons transferred, four hydrogen ions are translocated across the cytoplasmic membrane), and thus conserves the redox energy in a proton gradient. This subunit may bind ubiquinone. The sequence is that of NADH-quinone oxidoreductase subunit H from Bacillus cereus (strain G9842).